The sequence spans 453 residues: Serine/threonine-protein phosphatase 2A regulatory subunit B'' subunit gamma (453 aa).

2 consecutive EF-hand domains span residues 273 to 308 (PSALRVYGQYLNLDKDHNGMLSKEELSRYGTATMTN) and 341 to 376 (KEPAALQYIFKLLDIENKGYLNVFSLNYFFRAIQEL). Ca(2+) is bound by residues aspartate 286, aspartate 288, asparagine 290, methionine 292, and glutamate 297.

In terms of assembly, interacts with MCM3AP/GANP, PPP5C, and the phosphatase 2A core enzyme composed of the PPP2CA catalytic subunit and the constant regulatory subunit PPP2R1A. Finds in a complex with ABCB1, TFPI2 and PPP2R3C; leading to the dephosphorylation of ABCB1. Expressed in all tissues tested including heart, brain, spleen, thymus, lung, liver, kidney and testis.

It localises to the nucleus. Its subcellular location is the cytoplasm. In terms of biological role, may regulate MCM3AP phosphorylation through phosphatase recruitment. May act as a negative regulator of ABCB1 expression and function through the dephosphorylation of ABCB1 by TFPI2/PPP2R3C complex. May play a role in the activation-induced cell death of B-cells. This Mus musculus (Mouse) protein is Serine/threonine-protein phosphatase 2A regulatory subunit B'' subunit gamma (Ppp2r3c).